We begin with the raw amino-acid sequence, 248 residues long: Ankyrin repeat domain-containing protein 45 (248 aa).

Acidic residues-rich tracts occupy residues 1-10 (MEPEETLESE) and 22-33 (EYEESQEAEETG). A disordered region spans residues 1 to 42 (MEPEETLESESSEKSLFSSQQEYEESQEAEETGAENPLLQPT). 2 ANK repeats span residues 75–104 (VGRNLLYAACMAGKSDVIKALAKYGVNLNE) and 108–137 (RGYTLLHCAAAWGRLETLKALVELDVDIEA).

It localises to the cytoplasm. The protein resides in the midbody. The protein localises to the midbody ring. Its subcellular location is the cleavage furrow. In terms of biological role, may play a role during cell division. This Mus musculus (Mouse) protein is Ankyrin repeat domain-containing protein 45 (Ankrd45).